The following is a 1323-amino-acid chain: ABC transporter gloK (1323 aa).

Helical transmembrane passes span 6-26, 102-122, 138-158, 217-237, 240-260, 325-345, and 359-379; these read AIAS…TLEA, PHAL…AGIL, VAYG…VMST, IWAS…RLGV, VAAV…VFGF, LLVG…VFAF, and PLLA…GQAV. The ABC transmembrane type-1 1 domain occupies 142–380; that stretch reads LIAAYAIVYI…IFSLLGQAVS (239 aa). The 227-residue stretch at 471–697 folds into the ABC transporter 1 domain; it reads IRDCSACWSK…SSYLESLGTR (227 aa). 503-510 contributes to the ATP binding site; sequence GPIGSGKS. Helical transmembrane passes span 748 to 768, 795 to 815, 821 to 841, 859 to 879, 891 to 910, 976 to 996, and 1006 to 1026; these read GWVT…GLVF, YALW…WLMI, AAIQ…LVYF, LIDM…LSCI, YVAA…QLFY, LNLT…SIAL, and IGVA…LVYT. The region spanning 752–1031 is the ABC transmembrane type-1 2 domain; that stretch reads WWVFVLLCSG…TLVYTWTSLE (280 aa). The 232-residue stretch at 1069–1300 folds into the ABC transporter 2 domain; sequence IRFQSVSAAY…PSFFASLLKA (232 aa). ATP is bound at residue 1103-1110; the sequence is GRTGSGKS.

The protein belongs to the ABC transporter superfamily. ABCC family. Conjugate transporter (TC 3.A.1.208) subfamily.

The protein resides in the cell membrane. Functionally, 3-isopropylmalate dehydratase large subunit; part of the gene cluster that mediates the biosynthesis of pneumocandins, lipohexapeptides of the echinocandin family that prevent fungal cell wall formation by non-competitive inhibition of beta-1,3-glucan synthase. Possibly secretes antifungal pneumocandins, thus avoiding of intracellular accumulation and ameliorating the toxicity to the producing cells. This Glarea lozoyensis (strain ATCC 20868 / MF5171) protein is ABC transporter gloK.